Consider the following 251-residue polypeptide: Coproheme decarboxylase (251 aa).

Residues Arg133, 147 to 151 (YPMSK), His174, Gln187, and Ser225 contribute to the Fe-coproporphyrin III site. Tyr147 is an active-site residue.

This sequence belongs to the ChdC family. Type 1 subfamily. Fe-coproporphyrin III is required as a cofactor.

It carries out the reaction Fe-coproporphyrin III + 2 H2O2 + 2 H(+) = heme b + 2 CO2 + 4 H2O. The enzyme catalyses Fe-coproporphyrin III + H2O2 + H(+) = harderoheme III + CO2 + 2 H2O. The catalysed reaction is harderoheme III + H2O2 + H(+) = heme b + CO2 + 2 H2O. The protein operates within porphyrin-containing compound metabolism; protoheme biosynthesis. Its function is as follows. Involved in coproporphyrin-dependent heme b biosynthesis. Catalyzes the decarboxylation of Fe-coproporphyrin III (coproheme) to heme b (protoheme IX), the last step of the pathway. The reaction occurs in a stepwise manner with a three-propionate intermediate. This chain is Coproheme decarboxylase, found in Listeria monocytogenes serotype 4b (strain CLIP80459).